A 219-amino-acid chain; its full sequence is Large ribosomal subunit protein uL3 (219 aa).

The disordered stretch occupies residues Arg134–Gln153. Position 153 is an N5-methylglutamine (Gln153).

It belongs to the universal ribosomal protein uL3 family. As to quaternary structure, part of the 50S ribosomal subunit. Forms a cluster with proteins L14 and L19. Methylated by PrmB.

One of the primary rRNA binding proteins, it binds directly near the 3'-end of the 23S rRNA, where it nucleates assembly of the 50S subunit. The sequence is that of Large ribosomal subunit protein uL3 from Paraburkholderia phytofirmans (strain DSM 17436 / LMG 22146 / PsJN) (Burkholderia phytofirmans).